Here is a 181-residue protein sequence, read N- to C-terminus: Probable RNA 2'-phosphotransferase (181 aa).

The protein belongs to the KptA/TPT1 family.

Functionally, removes the 2'-phosphate from RNA via an intermediate in which the phosphate is ADP-ribosylated by NAD followed by a presumed transesterification to release the RNA and generate ADP-ribose 1''-2''-cyclic phosphate (APPR&gt;P). May function as an ADP-ribosylase. The sequence is that of Probable RNA 2'-phosphotransferase from Nostoc punctiforme (strain ATCC 29133 / PCC 73102).